The sequence spans 131 residues: Small ribosomal subunit protein uS8 (131 aa).

The protein belongs to the universal ribosomal protein uS8 family. As to quaternary structure, part of the 30S ribosomal subunit. Contacts proteins S5 and S12.

In terms of biological role, one of the primary rRNA binding proteins, it binds directly to 16S rRNA central domain where it helps coordinate assembly of the platform of the 30S subunit. This Polaromonas sp. (strain JS666 / ATCC BAA-500) protein is Small ribosomal subunit protein uS8.